Consider the following 131-residue polypeptide: ER membrane protein complex subunit 5 (131 aa).

Residues M1–P3 are Cytoplasmic-facing. A helical membrane pass occupies residues S4–L22. The Lumenal segment spans residues S23–I43. The chain crosses the membrane as a helical span at residues D44–I63. Topologically, residues A64–R131 are cytoplasmic. S120 is subject to Phosphoserine.

Belongs to the membrane magnesium transporter (TC 1.A.67) family. As to quaternary structure, component of the ER membrane protein complex (EMC).

Its subcellular location is the endoplasmic reticulum membrane. It is found in the golgi apparatus membrane. The protein resides in the early endosome membrane. In terms of biological role, part of the endoplasmic reticulum membrane protein complex (EMC) that enables the energy-independent insertion into endoplasmic reticulum membranes of newly synthesized membrane proteins. Preferentially accommodates proteins with transmembrane domains that are weakly hydrophobic or contain destabilizing features such as charged and aromatic residues. Involved in the cotranslational insertion of multi-pass membrane proteins in which stop-transfer membrane-anchor sequences become ER membrane spanning helices. It is also required for the post-translational insertion of tail-anchored/TA proteins in endoplasmic reticulum membranes. By mediating the proper cotranslational insertion of N-terminal transmembrane domains in an N-exo topology, with translocated N-terminus in the lumen of the ER, controls the topology of multi-pass membrane proteins like the G protein-coupled receptors. By regulating the insertion of various proteins in membranes, it is indirectly involved in many cellular processes. May be involved in Mg(2+) transport. This chain is ER membrane protein complex subunit 5, found in Pongo abelii (Sumatran orangutan).